Reading from the N-terminus, the 97-residue chain is Co-chaperonin GroES (97 aa).

This sequence belongs to the GroES chaperonin family. Heptamer of 7 subunits arranged in a ring. Interacts with the chaperonin GroEL.

Its subcellular location is the cytoplasm. Together with the chaperonin GroEL, plays an essential role in assisting protein folding. The GroEL-GroES system forms a nano-cage that allows encapsulation of the non-native substrate proteins and provides a physical environment optimized to promote and accelerate protein folding. GroES binds to the apical surface of the GroEL ring, thereby capping the opening of the GroEL channel. The polypeptide is Co-chaperonin GroES (Wigglesworthia glossinidia brevipalpis).